Consider the following 501-residue polypeptide: UPF0371 protein CD630_08980 (501 aa).

Belongs to the UPF0371 family.

This is UPF0371 protein CD630_08980 from Clostridioides difficile (strain 630) (Peptoclostridium difficile).